Reading from the N-terminus, the 273-residue chain is Putative ABC transporter ATP-binding protein DVU_1056 (273 aa).

Positions 10–242 (LSLDDIHFTY…IHHGGEVAHE (233 aa)) constitute an ABC transporter domain. 44 to 51 (GHNGSGKT) lines the ATP pocket. Positions 234 to 273 (HHGGEVAHEHPSRGCCHQHDGSHHHAGHDDDHPHTSQTTE) are disordered. Basic and acidic residues predominate over residues 235-267 (HGGEVAHEHPSRGCCHQHDGSHHHAGHDDDHPH).

Belongs to the ABC transporter superfamily.

The protein resides in the cell inner membrane. Functionally, probably part of an ABC transporter complex. Responsible for energy coupling to the transport system. The polypeptide is Putative ABC transporter ATP-binding protein DVU_1056 (Nitratidesulfovibrio vulgaris (strain ATCC 29579 / DSM 644 / CCUG 34227 / NCIMB 8303 / VKM B-1760 / Hildenborough) (Desulfovibrio vulgaris)).